Reading from the N-terminus, the 4903-residue chain is Histone-lysine N-methyltransferase 2C (4903 aa).

Disordered regions lie at residues methionine 1–serine 116 and leucine 159–glutamine 202. Residues glutamine 13–serine 28 show a composition bias toward pro residues. Phosphoserine occurs at positions 28 and 46. The a.T hook DNA-binding region spans lysine 34–serine 46. Basic residues predominate over residues arginine 50–glycine 59. A compositionally biased stretch (acidic residues) spans glutamate 64 to valine 81. Residues serine 89 and serine 113 each carry the phosphoserine modification. Residues serine 101–serine 116 are compositionally biased toward polar residues. A C2HC pre-PHD-type 1; degenerate zinc finger spans residues glutamate 226–isoleucine 261. PHD-type zinc fingers lie at residues glutamate 282 to isoleucine 330, aspartate 340 to cysteine 390, cysteine 387 to cysteine 437, and aspartate 463 to leucine 519. Residues cysteine 343–lysine 388 form an RING-type zinc finger. Positions arginine 435–lysine 488 constitute a DHHC domain. A disordered region spans residues serine 671–serine 703. Lysine 751 is modified (N6-acetyllysine). Basic residues predominate over residues threonine 824–serine 835. Disordered regions lie at residues threonine 824–glutamate 857 and glycine 882–lysine 904. Positions glycine 838–proline 848 are enriched in polar residues. Residue serine 847 is modified to Phosphoserine. PHD-type zinc fingers lie at residues glutamine 950–cysteine 1003, cysteine 1000–cysteine 1050, and leucine 1077–tyrosine 1132. Residues alanine 1208–glutamine 1318 form a disordered region. A compositionally biased stretch (basic and acidic residues) spans glutamine 1217 to isoleucine 1263. At serine 1294 the chain carries Phosphoserine. Over residues proline 1309–glutamine 1318 the composition is skewed to basic and acidic residues. Positions valine 1330–phenylalanine 1352 form a coiled coil. Disordered stretches follow at residues serine 1397–proline 1419 and histidine 1447–threonine 1473. Composition is skewed to polar residues over residues threonine 1406 to threonine 1415 and alanine 1455 to proline 1471. N6-acetyllysine is present on lysine 1497. Disordered regions lie at residues asparagine 1594–threonine 1617 and valine 1698–glutamate 1757. Positions aspartate 1599 to threonine 1617 are enriched in polar residues. Residues arginine 1707 to serine 1717 show a composition bias toward low complexity. Over residues serine 1718–phenylalanine 1742 the composition is skewed to basic and acidic residues. The stretch at arginine 1743 to leucine 1790 forms a coiled coil. N6-acetyllysine is present on lysine 1761. The segment at valine 1791–arginine 2375 is disordered. Over residues aspartate 1796–glutamine 1819 the composition is skewed to polar residues. Over residues proline 1855–arginine 1886 the composition is skewed to low complexity. At serine 1983 the chain carries Phosphoserine. The segment covering isoleucine 1986 to aspartate 2001 has biased composition (polar residues). N6-acetyllysine is present on lysine 2005. Composition is skewed to polar residues over residues glycine 2113–tyrosine 2124, serine 2137–proline 2151, and glycine 2325–proline 2334. Positions valine 2335–glutamine 2347 are enriched in low complexity. Residues serine 2355 to alanine 2369 are compositionally biased toward polar residues. Arginine 2447 and arginine 2563 each carry asymmetric dimethylarginine. 3 disordered regions span residues arginine 2561–glutamate 2668, lysine 2702–asparagine 2736, and valine 2786–aspartate 2844. Composition is skewed to polar residues over residues glutamine 2602–leucine 2611, proline 2621–isoleucine 2636, and proline 2653–glutamate 2668. The span at proline 2788–glutamine 2807 shows a compositional bias: basic and acidic residues. An N6-acetyllysine mark is found at lysine 2796 and lysine 2803. At serine 2822 the chain carries Phosphoserine. Tyrosine 2824 carries the phosphotyrosine modification. A compositionally biased stretch (basic and acidic residues) spans serine 2825–alanine 2843. N6-acetyllysine occurs at positions 2826 and 2862. The disordered stretch occupies residues glutamate 2920–isoleucine 2953. Low complexity predominate over residues proline 2929–serine 2942. 2 coiled-coil regions span residues leucine 3047–glutamate 3074 and asparagine 3166–glutamate 3193. The segment covering histidine 3198–lysine 3214 has biased composition (basic residues). The segment at histidine 3198–aspartate 3223 is disordered. 2 coiled-coil regions span residues alanine 3224–alanine 3270 and phenylalanine 3387–leucine 3432. 2 disordered regions span residues proline 3329–glutamine 3407 and serine 3444–alanine 3910. Over residues phenylalanine 3391 to glutamine 3407 the composition is skewed to basic and acidic residues. Low complexity predominate over residues leucine 3464–glutamine 3485. Composition is skewed to polar residues over residues glycine 3486–arginine 3503, proline 3515–phenylalanine 3524, proline 3557–glutamine 3586, and leucine 3632–leucine 3647. 2 stretches are compositionally biased toward basic and acidic residues: residues alanine 3697–aspartate 3739 and serine 3795–glutamate 3804. Lysine 3709 carries the post-translational modification N6-acetyllysine. Positions methionine 3871–asparagine 3885 are enriched in polar residues. Residues proline 3890 to methionine 3904 show a composition bias toward pro residues. Position 4027 is a phosphoserine (serine 4027). The residue at position 4132 (arginine 4132) is an Asymmetric dimethylarginine. Positions proline 4159–alanine 4184 are disordered. Serine 4260 carries the phosphoserine modification. Residues cysteine 4391–valine 4431 form a C2HC pre-PHD-type 2 zinc finger. The segment at methionine 4452–lysine 4499 adopts a PHD-type 8 zinc-finger fold. Residues aspartate 4537–lysine 4597 form the FYR N-terminal domain. The FYR C-terminal domain maps to aspartate 4598–tyrosine 4683. The WDR5 interaction motif (WIN) signature appears at glycine 4699–glutamate 4704. Residues serine 4763 to lysine 4879 form the SET domain. S-adenosyl-L-methionine-binding positions include tyrosine 4817 and asparagine 4840–histidine 4841. 4 residues coordinate Zn(2+): cysteine 4843, cysteine 4891, cysteine 4893, and cysteine 4898. The Post-SET domain maps to histidine 4887–asparagine 4903.

The protein belongs to the class V-like SAM-binding methyltransferase superfamily. Histone-lysine methyltransferase family. TRX/MLL subfamily. Component of the MLL3 complex (also named ASCOM complex), at least composed of catalytic subunit KMT2C/MLL3, ASH2L, RBBP5, WDR5, NCOA6, DPY30, KDM6A, PAXIP1/PTIP, PAGR1 and alpha- and beta-tubulin. Forms a core complex with the evolutionary conserved subcomplex WRAD composed of WDR5, RBBP5, ASH2L/ASH2 and DPY30 subunits; WRAD differentially stimulates the methyltransferase activity. Interacts (via WIN motif) with WDR5. In terms of tissue distribution, in adult, detected in testis, kidney, spleen and lung, weakly expressed in brain and absent in heart and liver. First detected throughout the embryo at 8 dpc when expression is strong in forebrain neuroepithelium and absent in heart. Expressed in the eye lens between 10 and 14.5 dpc. By 13 dpc, expressed strongly in spinal cord, hand/foot plates and gonads.

It is found in the nucleus. The catalysed reaction is L-lysyl(4)-[histone H3] + S-adenosyl-L-methionine = N(6)-methyl-L-lysyl(4)-[histone H3] + S-adenosyl-L-homocysteine + H(+). Functionally, histone methyltransferase that catalyzes methyl group transfer from S-adenosyl-L-methionine to the epsilon-amino group of 'Lys-4' of histone H3 (H3K4). Part of chromatin remodeling machinery predominantly forms H3K4me1 methylation marks at active chromatin sites where transcription and DNA repair take place. Likely plays a redundant role with KMT2D in enriching H3K4me1 mark on primed and active enhancer elements. The polypeptide is Histone-lysine N-methyltransferase 2C (Kmt2c) (Mus musculus (Mouse)).